The chain runs to 78 residues: Beta-defensin 105A (78 aa).

An N-terminal signal peptide occupies residues 1 to 27 (MALIRKTFYFVFAVFFILVQQPSGCQA). Cystine bridges form between Cys-43–Cys-74, Cys-53–Cys-67, and Cys-57–Cys-73.

The protein belongs to the beta-defensin family.

The protein resides in the secreted. Has antimicrobial activity. The polypeptide is Beta-defensin 105A (DEFB105A) (Macaca fascicularis (Crab-eating macaque)).